Reading from the N-terminus, the 297-residue chain is Aspartate carbamoyltransferase catalytic subunit (297 aa).

Positions 49 and 50 each coordinate carbamoyl phosphate. An L-aspartate-binding site is contributed by K77. Carbamoyl phosphate contacts are provided by R99, H129, and Q132. 2 residues coordinate L-aspartate: R162 and R215. Carbamoyl phosphate-binding residues include G256 and P257.

Belongs to the aspartate/ornithine carbamoyltransferase superfamily. ATCase family. As to quaternary structure, heterododecamer (2C3:3R2) of six catalytic PyrB chains organized as two trimers (C3), and six regulatory PyrI chains organized as three dimers (R2).

It catalyses the reaction carbamoyl phosphate + L-aspartate = N-carbamoyl-L-aspartate + phosphate + H(+). It participates in pyrimidine metabolism; UMP biosynthesis via de novo pathway; (S)-dihydroorotate from bicarbonate: step 2/3. Its function is as follows. Catalyzes the condensation of carbamoyl phosphate and aspartate to form carbamoyl aspartate and inorganic phosphate, the committed step in the de novo pyrimidine nucleotide biosynthesis pathway. This Legionella pneumophila (strain Corby) protein is Aspartate carbamoyltransferase catalytic subunit.